A 142-amino-acid chain; its full sequence is Ribosome-binding factor A (142 aa).

The disordered stretch occupies residues 119 to 142; that stretch reads EAKQKQHGVETDAEQGETKDEGDK.

This sequence belongs to the RbfA family. In terms of assembly, monomer. Binds 30S ribosomal subunits, but not 50S ribosomal subunits or 70S ribosomes.

It localises to the cytoplasm. Functionally, one of several proteins that assist in the late maturation steps of the functional core of the 30S ribosomal subunit. Associates with free 30S ribosomal subunits (but not with 30S subunits that are part of 70S ribosomes or polysomes). Required for efficient processing of 16S rRNA. May interact with the 5'-terminal helix region of 16S rRNA. This chain is Ribosome-binding factor A, found in Shewanella halifaxensis (strain HAW-EB4).